The chain runs to 205 residues: Large ribosomal subunit protein uL4 (205 aa).

The disordered stretch occupies residues 45-97; it reads RQGTSAVKNRSAVRGGGKKPWRQKGTGRARQGSIRAPQWRGGGTVFGPTPRSY. Positions 60-71 are enriched in basic residues; the sequence is GGKKPWRQKGTG.

The protein belongs to the universal ribosomal protein uL4 family. As to quaternary structure, part of the 50S ribosomal subunit.

Its function is as follows. One of the primary rRNA binding proteins, this protein initially binds near the 5'-end of the 23S rRNA. It is important during the early stages of 50S assembly. It makes multiple contacts with different domains of the 23S rRNA in the assembled 50S subunit and ribosome. Functionally, forms part of the polypeptide exit tunnel. The sequence is that of Large ribosomal subunit protein uL4 from Lactobacillus gasseri (strain ATCC 33323 / DSM 20243 / BCRC 14619 / CIP 102991 / JCM 1131 / KCTC 3163 / NCIMB 11718 / NCTC 13722 / AM63).